The sequence spans 919 residues: Tight junction protein ZO-3 (919 aa).

A PDZ 1 domain is found at 11–93 (TATLSKDPRR…MANITVKRPR (83 aa)). The disordered stretch occupies residues 92 to 173 (PRRIHLPATK…SPGGGSEANG (82 aa)). Residue Ser112 is modified to Phosphoserine. Over residues 117 to 131 (GPQRVEEVDQGRGYD) the composition is skewed to basic and acidic residues. Position 136 is a phosphoserine (Ser136). The span at 147 to 163 (RRPRPGRRGRAGSHGRR) shows a compositional bias: basic residues. Ser164, Ser169, Ser203, and Ser319 each carry phosphoserine. One can recognise a PDZ 2 domain in the interval 195 to 272 (SVLVKRRDSE…KLSLLVLRDR (78 aa)). The tract at residues 279 to 377 (IPPAVSDSDS…SSQSMEDRGY (99 aa)) is disordered. Residue Thr325 is modified to Phosphothreonine. Ser327 carries the post-translational modification Phosphoserine. The span at 332-360 (PRLRRESSVDSRTISEPDEQRSELPRESS) shows a compositional bias: basic and acidic residues. Ser371 bears the Phosphoserine mark. In terms of domain architecture, PDZ 3 spans 380–446 (DTRVVRFLKG…LTREEAVQFL (67 aa)). In terms of domain architecture, SH3 spans 475 to 549 (GDSFYIRTHF…PNQSRAEQLA (75 aa)). One can recognise a Guanylate kinase-like domain in the interval 580 to 761 (LRRGAKKTTQ…WYQELKAIIR (182 aa)). Ser591 carries the post-translational modification Phosphoserine. The segment covering 791 to 801 (ADSSADLSCDS) has biased composition (low complexity). Disordered stretches follow at residues 791–886 (ADSS…DSMR) and 899–919 (RVHD…ATDL). Residues 812–828 (EGGAYTDGEGYTDGEGG) show a composition bias toward gly residues. Phosphoserine is present on residues Ser856, Ser905, and Ser906.

It belongs to the MAGUK family. As to quaternary structure, interacts with occludin OCLN, claudins and TPJ1. Interacts with PATJ. Interacts with UBN1. Interacts with FASLG. Interacts with CCND1. Phosphorylated.

The protein localises to the cell membrane. The protein resides in the cell junction. It localises to the tight junction. It is found in the nucleus. Its function is as follows. TJP1, TJP2, and TJP3 are closely related scaffolding proteins that link tight junction (TJ) transmembrane proteins such as claudins, junctional adhesion molecules, and occludin to the actin cytoskeleton. The tight junction acts to limit movement of substances through the paracellular space and as a boundary between the compositionally distinct apical and basolateral plasma membrane domains of epithelial and endothelial cells. Binds and recruits PATJ to tight junctions where it connects and stabilizes apical and lateral components of tight junctions. Promotes cell-cycle progression through the sequestration of cyclin D1 (CCND1) at tight junctions during mitosis which prevents CCND1 degradation during M-phase and enables S-phase transition. With TJP1 and TJP2, participates in the junctional retention and stability of the transcription factor DBPA, but is not involved in its shuttling to the nucleus. Contrary to TJP2, TJP3 is dispensable for individual viability, embryonic development, epithelial differentiation, and the establishment of TJs, at least in the laboratory environment. The sequence is that of Tight junction protein ZO-3 (TJP3) from Homo sapiens (Human).